A 245-amino-acid chain; its full sequence is Demethylmenaquinone methyltransferase (245 aa).

S-adenosyl-L-methionine is bound by residues threonine 70, aspartate 90, and 118–119; that span reads DC.

Belongs to the class I-like SAM-binding methyltransferase superfamily. MenG/UbiE family.

It catalyses the reaction a 2-demethylmenaquinol + S-adenosyl-L-methionine = a menaquinol + S-adenosyl-L-homocysteine + H(+). The protein operates within quinol/quinone metabolism; menaquinone biosynthesis; menaquinol from 1,4-dihydroxy-2-naphthoate: step 2/2. Functionally, methyltransferase required for the conversion of demethylmenaquinol (DMKH2) to menaquinol (MKH2). The polypeptide is Demethylmenaquinone methyltransferase (Bacteroides fragilis (strain ATCC 25285 / DSM 2151 / CCUG 4856 / JCM 11019 / LMG 10263 / NCTC 9343 / Onslow / VPI 2553 / EN-2)).